We begin with the raw amino-acid sequence, 227 residues long: Small ribosomal subunit protein uS3 (227 aa).

One can recognise a KH type-2 domain in the interval 39–107; the sequence is VREFLMKKLE…PVHINIEEIR (69 aa).

The protein belongs to the universal ribosomal protein uS3 family. As to quaternary structure, part of the 30S ribosomal subunit. Forms a tight complex with proteins S10 and S14.

Functionally, binds the lower part of the 30S subunit head. Binds mRNA in the 70S ribosome, positioning it for translation. In Hahella chejuensis (strain KCTC 2396), this protein is Small ribosomal subunit protein uS3.